The primary structure comprises 306 residues: Pantothenate synthetase (306 aa).

37–44 (MGALHEGH) is an ATP binding site. His44 serves as the catalytic Proton donor. Gln69 is a binding site for (R)-pantoate. Gln69 contacts beta-alanine. Position 155 to 158 (155 to 158 (GEKD)) interacts with ATP. Residue Gln161 coordinates (R)-pantoate. Residues Val184 and 192 to 195 (KSSR) contribute to the ATP site.

The protein belongs to the pantothenate synthetase family. As to quaternary structure, homodimer.

The protein resides in the cytoplasm. It catalyses the reaction (R)-pantoate + beta-alanine + ATP = (R)-pantothenate + AMP + diphosphate + H(+). The protein operates within cofactor biosynthesis; (R)-pantothenate biosynthesis; (R)-pantothenate from (R)-pantoate and beta-alanine: step 1/1. Functionally, catalyzes the condensation of pantoate with beta-alanine in an ATP-dependent reaction via a pantoyl-adenylate intermediate. The sequence is that of Pantothenate synthetase from Corynebacterium jeikeium (strain K411).